The sequence spans 477 residues: Glycogen synthase (477 aa).

Lys15 provides a ligand contact to ADP-alpha-D-glucose.

Belongs to the glycosyltransferase 1 family. Bacterial/plant glycogen synthase subfamily.

The catalysed reaction is [(1-&gt;4)-alpha-D-glucosyl](n) + ADP-alpha-D-glucose = [(1-&gt;4)-alpha-D-glucosyl](n+1) + ADP + H(+). Its pathway is glycan biosynthesis; glycogen biosynthesis. Functionally, synthesizes alpha-1,4-glucan chains using ADP-glucose. This chain is Glycogen synthase, found in Caldicellulosiruptor saccharolyticus (strain ATCC 43494 / DSM 8903 / Tp8T 6331).